The following is a 104-amino-acid chain: MRVKKGDLVEVIAGKDRGKRGKVLRVIPREDRVIVEGINIVHRHMRPTPDMPQGGIVKNEAPIHISNVMLVCPNCDEKTRIGATYLEDGQKVRKCKKCDEVVDK.

The protein belongs to the universal ribosomal protein uL24 family. In terms of assembly, part of the 50S ribosomal subunit.

In terms of biological role, one of two assembly initiator proteins, it binds directly to the 5'-end of the 23S rRNA, where it nucleates assembly of the 50S subunit. One of the proteins that surrounds the polypeptide exit tunnel on the outside of the subunit. The protein is Large ribosomal subunit protein uL24 of Halothermothrix orenii (strain H 168 / OCM 544 / DSM 9562).